The following is a 429-amino-acid chain: Gamma-glutamyl phosphate reductase (429 aa).

Belongs to the gamma-glutamyl phosphate reductase family.

Its subcellular location is the cytoplasm. It carries out the reaction L-glutamate 5-semialdehyde + phosphate + NADP(+) = L-glutamyl 5-phosphate + NADPH + H(+). It participates in amino-acid biosynthesis; L-proline biosynthesis; L-glutamate 5-semialdehyde from L-glutamate: step 2/2. In terms of biological role, catalyzes the NADPH-dependent reduction of L-glutamate 5-phosphate into L-glutamate 5-semialdehyde and phosphate. The product spontaneously undergoes cyclization to form 1-pyrroline-5-carboxylate. The protein is Gamma-glutamyl phosphate reductase of Methylocella silvestris (strain DSM 15510 / CIP 108128 / LMG 27833 / NCIMB 13906 / BL2).